Here is a 104-residue protein sequence, read N- to C-terminus: Large ribosomal subunit protein uL24 (104 aa).

This sequence belongs to the universal ribosomal protein uL24 family. Part of the 50S ribosomal subunit.

Functionally, one of two assembly initiator proteins, it binds directly to the 5'-end of the 23S rRNA, where it nucleates assembly of the 50S subunit. In terms of biological role, one of the proteins that surrounds the polypeptide exit tunnel on the outside of the subunit. This is Large ribosomal subunit protein uL24 from Rhodopseudomonas palustris (strain BisB18).